Consider the following 147-residue polypeptide: MPTYTPKAGDVTRTWYVIDATDVVLGRLAVQAANLLRGKHKPTFAPHVDGGDFVIIINAEKIALSGNKLTNKFAYRHSGFPGGLSKRSIGEQLEKFPTRTVEKAIVGMLPKNKLGRQIERKLKVYAGAEHPHAAQQPIPFEIKQVAQ.

Belongs to the universal ribosomal protein uL13 family. Part of the 50S ribosomal subunit.

This protein is one of the early assembly proteins of the 50S ribosomal subunit, although it is not seen to bind rRNA by itself. It is important during the early stages of 50S assembly. The chain is Large ribosomal subunit protein uL13 from Mycobacteroides abscessus (strain ATCC 19977 / DSM 44196 / CCUG 20993 / CIP 104536 / JCM 13569 / NCTC 13031 / TMC 1543 / L948) (Mycobacterium abscessus).